The chain runs to 335 residues: Cytochrome c biogenesis protein CcsA (335 aa).

8 consecutive transmembrane segments (helical) span residues 15-35 (FLLL…PNVT), 36-56 (WLPT…ATLL), 68-88 (LSNL…IHLV), 97-117 (LVGV…ALSL), 142-162 (VMML…AFLV), 243-263 (IIGL…VWAN), 278-298 (WALI…TKGW), and 304-324 (AILA…VNLL).

Belongs to the CcmF/CycK/Ccl1/NrfE/CcsA family. As to quaternary structure, may interact with ccs1.

It localises to the cellular thylakoid membrane. In terms of biological role, required during biogenesis of c-type cytochromes (cytochrome c6 and cytochrome f) at the step of heme attachment. The protein is Cytochrome c biogenesis protein CcsA of Crocosphaera subtropica (strain ATCC 51142 / BH68) (Cyanothece sp. (strain ATCC 51142)).